A 293-amino-acid polypeptide reads, in one-letter code: Homoserine O-acetyltransferase (293 aa).

Residue Cys141 is the Acyl-thioester intermediate of the active site. Substrate is bound by residues Lys162 and Ser190. His234 serves as the catalytic Proton acceptor. The active site involves Glu236. Arg248 is a binding site for substrate.

This sequence belongs to the MetA family.

It is found in the cytoplasm. It catalyses the reaction L-homoserine + acetyl-CoA = O-acetyl-L-homoserine + CoA. The protein operates within amino-acid biosynthesis; L-methionine biosynthesis via de novo pathway; O-acetyl-L-homoserine from L-homoserine: step 1/1. Its function is as follows. Transfers an acetyl group from acetyl-CoA to L-homoserine, forming acetyl-L-homoserine. In Campylobacter jejuni subsp. jejuni serotype O:2 (strain ATCC 700819 / NCTC 11168), this protein is Homoserine O-acetyltransferase.